The primary structure comprises 343 residues: Phenylalanine--tRNA ligase alpha subunit (343 aa).

Position 256 (Glu256) interacts with Mg(2+).

Belongs to the class-II aminoacyl-tRNA synthetase family. Phe-tRNA synthetase alpha subunit type 1 subfamily. Tetramer of two alpha and two beta subunits. It depends on Mg(2+) as a cofactor.

It localises to the cytoplasm. It catalyses the reaction tRNA(Phe) + L-phenylalanine + ATP = L-phenylalanyl-tRNA(Phe) + AMP + diphosphate + H(+). This chain is Phenylalanine--tRNA ligase alpha subunit, found in Phytoplasma australiense.